Reading from the N-terminus, the 367-residue chain is Probable dual-specificity RNA methyltransferase RlmN (367 aa).

Residue Glu-92 is the Proton acceptor of the active site. Positions 98–326 constitute a Radical SAM core domain; it reads QEYGLSVCVT…YDTLKKNGIN (229 aa). A disulfide bridge connects residues Cys-105 and Cys-341. Residues Cys-112, Cys-116, and Cys-119 each contribute to the [4Fe-4S] cluster site. Residues 164–165, Ser-196, 219–221, and Asn-297 contribute to the S-adenosyl-L-methionine site; these read GE and SLH. Cys-341 serves as the catalytic S-methylcysteine intermediate.

It belongs to the radical SAM superfamily. RlmN family. [4Fe-4S] cluster is required as a cofactor.

The protein localises to the cytoplasm. It carries out the reaction adenosine(2503) in 23S rRNA + 2 reduced [2Fe-2S]-[ferredoxin] + 2 S-adenosyl-L-methionine = 2-methyladenosine(2503) in 23S rRNA + 5'-deoxyadenosine + L-methionine + 2 oxidized [2Fe-2S]-[ferredoxin] + S-adenosyl-L-homocysteine. The enzyme catalyses adenosine(37) in tRNA + 2 reduced [2Fe-2S]-[ferredoxin] + 2 S-adenosyl-L-methionine = 2-methyladenosine(37) in tRNA + 5'-deoxyadenosine + L-methionine + 2 oxidized [2Fe-2S]-[ferredoxin] + S-adenosyl-L-homocysteine. Functionally, specifically methylates position 2 of adenine 2503 in 23S rRNA and position 2 of adenine 37 in tRNAs. This chain is Probable dual-specificity RNA methyltransferase RlmN, found in Listeria monocytogenes serovar 1/2a (strain ATCC BAA-679 / EGD-e).